Here is a 188-residue protein sequence, read N- to C-terminus: GMP synthase [glutamine-hydrolyzing] subunit A (188 aa).

Residues 2–188 form the Glutamine amidotransferase type-1 domain; sequence KIAVIYFGGQ…FKNFIEACKK (187 aa). The active-site Nucleophile is cysteine 79. Active-site residues include histidine 166 and glutamate 168.

Heterodimer composed of a glutamine amidotransferase subunit (A) and a GMP-binding subunit (B).

The enzyme catalyses XMP + L-glutamine + ATP + H2O = GMP + L-glutamate + AMP + diphosphate + 2 H(+). It participates in purine metabolism; GMP biosynthesis; GMP from XMP (L-Gln route): step 1/1. Its function is as follows. Catalyzes the synthesis of GMP from XMP. The chain is GMP synthase [glutamine-hydrolyzing] subunit A from Sulfurisphaera tokodaii (strain DSM 16993 / JCM 10545 / NBRC 100140 / 7) (Sulfolobus tokodaii).